We begin with the raw amino-acid sequence, 445 residues long: Argininosuccinate synthase (445 aa).

Residues 17–25 (AFSGGLDTS) and Ala-43 each bind ATP. Residue Tyr-99 participates in L-citrulline binding. ATP contacts are provided by Gly-129 and Thr-131. The L-aspartate site is built by Thr-131, Asn-135, and Asp-136. Asn-135 contacts L-citrulline. Asp-136 lines the ATP pocket. Residues Arg-139 and Ser-192 each coordinate L-citrulline. Asp-194 serves as a coordination point for ATP. L-citrulline is bound by residues Thr-201, Glu-203, and Glu-280.

This sequence belongs to the argininosuccinate synthase family. Type 2 subfamily. Homotetramer.

It is found in the cytoplasm. The catalysed reaction is L-citrulline + L-aspartate + ATP = 2-(N(omega)-L-arginino)succinate + AMP + diphosphate + H(+). It functions in the pathway amino-acid biosynthesis; L-arginine biosynthesis; L-arginine from L-ornithine and carbamoyl phosphate: step 2/3. The protein is Argininosuccinate synthase of Bradyrhizobium sp. (strain BTAi1 / ATCC BAA-1182).